Consider the following 616-residue polypeptide: MPKYRSATTTHGRNMAGARALWRATGMTDSDFGKPIIAVVNSFTQFVPGHVHLRDLGKLVAEQIEASGGVAKEFNTIAVDDGIAMGHGGMLYSLPSRELIADSVEYMVNAHCADAMVCISNCDKITPGMLMASLRLNIPVIFVSGGPMEAGKTKLSDKIIKLDLVDAMIQGADPKVSDDQSNQVERSACPTCGSCSGMFTANSMNCLTEALGLSQPGNGSLLATHADRKQLFLNAGKRIVELTKRYYEQNDESALPRNIASKAAFENAMTLDIAMGGSTNTVLHLLAAAQEAEIDFTMSDIDKLSRKVPQLCKVAPSTQKYHMEDVHRAGGVLGILGELDRAGLLNCNVKNVLGLTLPQTLEQYDITVTQDEAVKKMFRAGPAGIRTTQAFSQDCRWDSLDDDRSAGCIRSLEYAYSKDGGLAVLYGNFAENGCIVKTAGVDDSILKFTGPAKVYESQDDAVEAILGGKVVEGDVVVIRYEGPKGGPGMQEMLYPTSFLKSMGLGKACALITDGRFSGGTSGLSIGHVSPEAASGGTIALIEDGDTIAIDIPNRSIQLQLNEAEIAARREAQEARGDKAWTPKNRQRQVSFALRAYASLATSADKGAVRDKSKLGG.

Position 81 (Asp81) interacts with Mg(2+). Cys122 contributes to the [2Fe-2S] cluster binding site. Asp123 and Lys124 together coordinate Mg(2+). Lys124 is subject to N6-carboxylysine. Cys195 serves as a coordination point for [2Fe-2S] cluster. A Mg(2+)-binding site is contributed by Glu491. Ser517 functions as the Proton acceptor in the catalytic mechanism.

It belongs to the IlvD/Edd family. As to quaternary structure, homodimer. Requires [2Fe-2S] cluster as cofactor. The cofactor is Mg(2+).

It catalyses the reaction (2R)-2,3-dihydroxy-3-methylbutanoate = 3-methyl-2-oxobutanoate + H2O. It carries out the reaction (2R,3R)-2,3-dihydroxy-3-methylpentanoate = (S)-3-methyl-2-oxopentanoate + H2O. It functions in the pathway amino-acid biosynthesis; L-isoleucine biosynthesis; L-isoleucine from 2-oxobutanoate: step 3/4. The protein operates within amino-acid biosynthesis; L-valine biosynthesis; L-valine from pyruvate: step 3/4. In terms of biological role, functions in the biosynthesis of branched-chain amino acids. Catalyzes the dehydration of (2R,3R)-2,3-dihydroxy-3-methylpentanoate (2,3-dihydroxy-3-methylvalerate) into 2-oxo-3-methylpentanoate (2-oxo-3-methylvalerate) and of (2R)-2,3-dihydroxy-3-methylbutanoate (2,3-dihydroxyisovalerate) into 2-oxo-3-methylbutanoate (2-oxoisovalerate), the penultimate precursor to L-isoleucine and L-valine, respectively. This Salmonella gallinarum (strain 287/91 / NCTC 13346) protein is Dihydroxy-acid dehydratase.